Reading from the N-terminus, the 112-residue chain is T cell receptor alpha variable 12-1 (112 aa).

The signal sequence occupies residues 1 to 20; that stretch reads MISLRVLLVILWLQLSWVWS. The Ig-like domain occupies 23-112; sequence KEVEQDPGPF…DSATYLCVVN (90 aa). Residue N43 is glycosylated (N-linked (GlcNAc...) asparagine). Cysteines 44 and 109 form a disulfide.

As to quaternary structure, alpha-beta TR is a heterodimer composed of an alpha and beta chain; disulfide-linked. The alpha-beta TR is associated with the transmembrane signaling CD3 coreceptor proteins to form the TR-CD3 (TcR or TCR). The assembly of alpha-beta TR heterodimers with CD3 occurs in the endoplasmic reticulum where a single alpha-beta TR heterodimer associates with one CD3D-CD3E heterodimer, one CD3G-CD3E heterodimer and one CD247 homodimer forming a stable octameric structure. CD3D-CD3E and CD3G-CD3E heterodimers preferentially associate with TR alpha and TR beta chains, respectively. The association of the CD247 homodimer is the last step of TcR assembly in the endoplasmic reticulum and is required for transport to the cell surface.

The protein localises to the cell membrane. V region of the variable domain of T cell receptor (TR) alpha chain that participates in the antigen recognition. Alpha-beta T cell receptors are antigen specific receptors which are essential to the immune response and are present on the cell surface of T lymphocytes. Recognize peptide-major histocompatibility (MH) (pMH) complexes that are displayed by antigen presenting cells (APC), a prerequisite for efficient T cell adaptive immunity against pathogens. Binding of alpha-beta TR to pMH complex initiates TR-CD3 clustering on the cell surface and intracellular activation of LCK that phosphorylates the ITAM motifs of CD3G, CD3D, CD3E and CD247 enabling the recruitment of ZAP70. In turn ZAP70 phosphorylates LAT, which recruits numerous signaling molecules to form the LAT signalosome. The LAT signalosome propagates signal branching to three major signaling pathways, the calcium, the mitogen-activated protein kinase (MAPK) kinase and the nuclear factor NF-kappa-B (NF-kB) pathways, leading to the mobilization of transcription factors that are critical for gene expression and essential for T cell growth and differentiation. The T cell repertoire is generated in the thymus, by V-(D)-J rearrangement. This repertoire is then shaped by intrathymic selection events to generate a peripheral T cell pool of self-MH restricted, non-autoaggressive T cells. Post-thymic interaction of alpha-beta TR with the pMH complexes shapes TR structural and functional avidity. In Homo sapiens (Human), this protein is T cell receptor alpha variable 12-1.